The sequence spans 220 residues: Catechol O-methyltransferase (220 aa).

Residues V44, E66, 68 to 69 (GT), S74, E92, and A121 contribute to the S-adenosyl-L-methionine site. D139 contacts a divalent metal cation. An S-adenosyl-L-methionine-binding site is contributed by D141. Positions 165 and 166 each coordinate a divalent metal cation.

This sequence belongs to the class I-like SAM-binding methyltransferase superfamily. Cation-dependent O-methyltransferase family. Homodimer. Requires a divalent metal cation as cofactor.

It catalyses the reaction a catechol + S-adenosyl-L-methionine = a guaiacol + S-adenosyl-L-homocysteine + H(+). With respect to regulation, inhibited by EDTA. Catechol O-methyltransferase that can use various catechol-like compounds such as gallic acid (GA), 3,4-dihydroxy-5-methoxy-benzoic acid (5OMeBA), protocatechuic acid (PCA), 3,4-dihydroxy-benzaldehyde (DHA), dopamine, caffeic acid (CA), luteolin, quercetin, and 5-hydroxyuridine. In Mycobacterium tuberculosis (strain ATCC 25618 / H37Rv), this protein is Catechol O-methyltransferase.